Reading from the N-terminus, the 275-residue chain is Lycopene elongase/hydratase (275 aa).

Helical transmembrane passes span 13 to 33 (FWLYLAGPVLVGVSYGATTVG), 38 to 58 (APAVVLFSYFLLPANIYLYGI), 84 to 104 (AAVAVIVAVCGVFLGFVAAPL), 107 to 127 (EAWPYLAAWFVLATEYSAPPL), 134 to 154 (VLDSLSNGLYVLPAAAAYAGV), 160 to 180 (PLLAVAGGWLWAMGMHTFSAI), 203 to 223 (ALAYCAGIWLLSAAVFALVDV), 225 to 245 (FGLLLLAYPVLVFGIRRLQVA), and 253 to 273 (YPAVNTLVGMVFTLGGLWGVV).

Belongs to the UbiA prenyltransferase family.

The protein localises to the cell membrane. The enzyme catalyses all-trans-lycopene + dimethylallyl diphosphate + H2O = dihydroisopentenyldehydrorhodopin + diphosphate. It carries out the reaction isopentenyldehydrorhodopin + dimethylallyl diphosphate + H2O = dihydrobisanhydrobacterioruberin + diphosphate. It functions in the pathway carotenoid biosynthesis. Its activity is regulated as follows. Inhibited by bacterioopsin. Involved in the biosynthesis of the acyclic C50 carotenoid bacterioruberin (BR). Acts as a bifunctional elongase/hydratase that catalyzes the elongation of lycopene by attaching a C(5) isoprene unit at C-2, as well as the hydroxylation of the previous end of the molecule. The enzyme acts at both ends of the substrate, and catalyzes the conversion of lycopene to the C(45) intermediate dihydroisopentenyldehydrorhodopin (DH-IDR) and the conversion of isopentenyldehydrorhodopin (IDR) to the C(50) carotenoid dihydrobisanhydrobacterioruberin (DH-BABR). Can also catalyze the conversion of lycopene to tetrahydrobisanhydrobacterioruberin (TH-BABR). The protein is Lycopene elongase/hydratase of Halobacterium salinarum (strain ATCC 700922 / JCM 11081 / NRC-1) (Halobacterium halobium).